The chain runs to 234 residues: Immune-associated nucleotide-binding protein 2 (234 aa).

Residues 21-223 enclose the AIG1-type G domain; sequence KPVKNIVLVG…YTEDMYRNIK (203 aa). GTP contacts are provided by residues 30 to 38, Ser-51, and Asn-183; that span reads GRSVNGICT.

The protein belongs to the TRAFAC class TrmE-Era-EngA-EngB-Septin-like GTPase superfamily. AIG1/Toc34/Toc159-like paraseptin GTPase family. IAN subfamily. In terms of tissue distribution, mostly expressed in pollen. Also detected in lateral roots and radicles.

The chain is Immune-associated nucleotide-binding protein 2 from Arabidopsis thaliana (Mouse-ear cress).